A 147-amino-acid polypeptide reads, in one-letter code: D-aminoacyl-tRNA deacylase (147 aa).

The short motif at 138–139 (GP) is the Gly-cisPro motif, important for rejection of L-amino acids element.

This sequence belongs to the DTD family. Homodimer.

It is found in the cytoplasm. The enzyme catalyses glycyl-tRNA(Ala) + H2O = tRNA(Ala) + glycine + H(+). It catalyses the reaction a D-aminoacyl-tRNA + H2O = a tRNA + a D-alpha-amino acid + H(+). In terms of biological role, an aminoacyl-tRNA editing enzyme that deacylates mischarged D-aminoacyl-tRNAs. Also deacylates mischarged glycyl-tRNA(Ala), protecting cells against glycine mischarging by AlaRS. Acts via tRNA-based rather than protein-based catalysis; rejects L-amino acids rather than detecting D-amino acids in the active site. By recycling D-aminoacyl-tRNA to D-amino acids and free tRNA molecules, this enzyme counteracts the toxicity associated with the formation of D-aminoacyl-tRNA entities in vivo and helps enforce protein L-homochirality. This Prosthecochloris aestuarii (strain DSM 271 / SK 413) protein is D-aminoacyl-tRNA deacylase.